We begin with the raw amino-acid sequence, 80 residues long: Acyl carrier protein (80 aa).

One can recognise a Carrier domain in the interval 4-79 (EEIKDKVFDI…QAIDYIVNAK (76 aa)). Residue S39 is modified to O-(pantetheine 4'-phosphoryl)serine.

Belongs to the acyl carrier protein (ACP) family. Post-translationally, 4'-phosphopantetheine is transferred from CoA to a specific serine of apo-ACP by AcpS. This modification is essential for activity because fatty acids are bound in thioester linkage to the sulfhydryl of the prosthetic group.

Its subcellular location is the cytoplasm. Its pathway is lipid metabolism; fatty acid biosynthesis. Carrier of the growing fatty acid chain in fatty acid biosynthesis. In Prosthecochloris aestuarii (strain DSM 271 / SK 413), this protein is Acyl carrier protein.